A 396-amino-acid chain; its full sequence is CCA-adding enzyme (396 aa).

Positions 32 and 35 each coordinate ATP. CTP contacts are provided by Gly-32 and Arg-35. Mg(2+) is bound by residues Asp-45 and Asp-47. Residues Arg-116, Asp-159, Arg-162, Arg-165, and Arg-168 each coordinate ATP. Residues Arg-116, Asp-159, Arg-162, Arg-165, and Arg-168 each coordinate CTP.

Belongs to the tRNA nucleotidyltransferase/poly(A) polymerase family. Bacterial CCA-adding enzyme type 3 subfamily. Homodimer. Requires Mg(2+) as cofactor.

The enzyme catalyses a tRNA precursor + 2 CTP + ATP = a tRNA with a 3' CCA end + 3 diphosphate. The catalysed reaction is a tRNA with a 3' CCA end + 2 CTP + ATP = a tRNA with a 3' CCACCA end + 3 diphosphate. In terms of biological role, catalyzes the addition and repair of the essential 3'-terminal CCA sequence in tRNAs without using a nucleic acid template. Adds these three nucleotides in the order of C, C, and A to the tRNA nucleotide-73, using CTP and ATP as substrates and producing inorganic pyrophosphate. tRNA 3'-terminal CCA addition is required both for tRNA processing and repair. Also involved in tRNA surveillance by mediating tandem CCA addition to generate a CCACCA at the 3' terminus of unstable tRNAs. While stable tRNAs receive only 3'-terminal CCA, unstable tRNAs are marked with CCACCA and rapidly degraded. In Lactobacillus delbrueckii subsp. bulgaricus (strain ATCC 11842 / DSM 20081 / BCRC 10696 / JCM 1002 / NBRC 13953 / NCIMB 11778 / NCTC 12712 / WDCM 00102 / Lb 14), this protein is CCA-adding enzyme.